We begin with the raw amino-acid sequence, 150 residues long: Photosystem II extrinsic protein V (150 aa).

A signal peptide spans 1–20 (MIRVIMLLVLVWMTPMISWA). Heme c-binding residues include C50, C53, H54, and H105.

The protein belongs to the cytochrome c family. PsbV subfamily. As to quaternary structure, PSII is composed of 1 copy each of membrane proteins PsbA, PsbB, PsbC, PsbD, PsbE, PsbF, PsbH, PsbI, PsbJ, PsbK, PsbL, PsbM, PsbT, PsbY, PsbZ, Psb30/Ycf12, at least 3 peripheral proteins of the oxygen-evolving complex and a large number of cofactors. It forms dimeric complexes. The extrinsic subunits in red algae are PsbO (OEC33), PsbQ', cytochrome c-550 and PsbU. The cofactor is heme c.

The protein localises to the plastid. Its subcellular location is the chloroplast thylakoid membrane. One of the extrinsic, lumenal subunits of photosystem II (PSII). PSII is a light-driven water plastoquinone oxidoreductase, using light energy to abstract electrons from H(2)O, generating a proton gradient subsequently used for ATP formation. The extrinsic proteins stabilize the structure of photosystem II oxygen-evolving complex (OEC), the ion environment of oxygen evolution and protect the OEC against heat-induced inactivation. The polypeptide is Photosystem II extrinsic protein V (Cyanidioschyzon merolae (strain NIES-3377 / 10D) (Unicellular red alga)).